The following is a 187-amino-acid chain: MSINPLASKIASPYARALYDFSVEQNIMHQVTADFQNLDVFLAEVPTLMEYLGNPIVTATQKEALLTKTLKSQLNAETFKFLMVLVKRDRINLLPTIITTYLELVYKTASVKMIEVSTAFPFTTLQKLNLIKKLKELTNAREIRLVVTVDSSLIGGFLIKTNSKVIDFTIKNQLENLAKHLDGVLEI.

This sequence belongs to the ATPase delta chain family. F-type ATPases have 2 components, F(1) - the catalytic core - and F(0) - the membrane proton channel. F(1) has five subunits: alpha(3), beta(3), gamma(1), delta(1), epsilon(1). CF(0) has four main subunits: a(1), b(1), b'(1) and c(10-14). The alpha and beta chains form an alternating ring which encloses part of the gamma chain. F(1) is attached to F(0) by a central stalk formed by the gamma and epsilon chains, while a peripheral stalk is formed by the delta, b and b' chains.

The protein resides in the plastid. It localises to the chloroplast thylakoid membrane. Its function is as follows. F(1)F(0) ATP synthase produces ATP from ADP in the presence of a proton or sodium gradient. F-type ATPases consist of two structural domains, F(1) containing the extramembraneous catalytic core and F(0) containing the membrane proton channel, linked together by a central stalk and a peripheral stalk. During catalysis, ATP synthesis in the catalytic domain of F(1) is coupled via a rotary mechanism of the central stalk subunits to proton translocation. This protein is part of the stalk that links CF(0) to CF(1). It either transmits conformational changes from CF(0) to CF(1) or is implicated in proton conduction. The sequence is that of ATP synthase subunit delta, chloroplastic from Thalassiosira pseudonana (Marine diatom).